The chain runs to 292 residues: 33 kDa chaperonin (292 aa).

Intrachain disulfides connect C230-C232 and C263-C266.

This sequence belongs to the HSP33 family. Post-translationally, under oxidizing conditions two disulfide bonds are formed involving the reactive cysteines. Under reducing conditions zinc is bound to the reactive cysteines and the protein is inactive.

The protein localises to the cytoplasm. Redox regulated molecular chaperone. Protects both thermally unfolding and oxidatively damaged proteins from irreversible aggregation. Plays an important role in the bacterial defense system toward oxidative stress. The protein is 33 kDa chaperonin of Escherichia coli O7:K1 (strain IAI39 / ExPEC).